The chain runs to 228 residues: Adenosylcobinamide-GDP ribazoletransferase (228 aa).

Transmembrane regions (helical) follow at residues 24 to 44 (VWMLPLLTPLTAFIPSLILYL), 50 to 70 (NVLSILSLYWVIGLLHLDGLA), 96 to 116 (IAGTFAVVMILLIQVYSLFSA), 117 to 137 (PFYSIYLAELNSKMAMLLALA), 159 to 176 (VFLGGVLYALLLIPILLY), and 181 to 198 (IFALLGLVGGIYAVKISL).

The protein belongs to the CobS family. Requires Mg(2+) as cofactor.

It localises to the cell membrane. The enzyme catalyses alpha-ribazole + adenosylcob(III)inamide-GDP = adenosylcob(III)alamin + GMP + H(+). The catalysed reaction is alpha-ribazole 5'-phosphate + adenosylcob(III)inamide-GDP = adenosylcob(III)alamin 5'-phosphate + GMP + H(+). Its pathway is cofactor biosynthesis; adenosylcobalamin biosynthesis; adenosylcobalamin from cob(II)yrinate a,c-diamide: step 7/7. Functionally, joins adenosylcobinamide-GDP and alpha-ribazole to generate adenosylcobalamin (Ado-cobalamin). Also synthesizes adenosylcobalamin 5'-phosphate from adenosylcobinamide-GDP and alpha-ribazole 5'-phosphate. The protein is Adenosylcobinamide-GDP ribazoletransferase of Pyrococcus furiosus (strain ATCC 43587 / DSM 3638 / JCM 8422 / Vc1).